The chain runs to 212 residues: Mediator of RNA polymerase II transcription subunit 20 (212 aa).

This sequence belongs to the Mediator complex subunit 20 family. In terms of assembly, component of the Mediator complex, which is composed of MED1, MED4, MED6, MED7, MED8, MED9, MED10, MED11, MED12, MED13, MED13L, MED14, MED15, MED16, MED17, MED18, MED19, MED20, MED21, MED22, MED23, MED24, MED25, MED26, MED27, MED29, MED30, MED31, CCNC, CDK8 and CDC2L6/CDK11. The MED12, MED13, CCNC and CDK8 subunits form a distinct module termed the CDK8 module. Mediator containing the CDK8 module is less active than Mediator lacking this module in supporting transcriptional activation. Individual preparations of the Mediator complex lacking one or more distinct subunits have been variously termed ARC, CRSP, DRIP, PC2, SMCC and TRAP. Interacts with PPARG.

It is found in the nucleus. Component of the Mediator complex, a coactivator involved in the regulated transcription of nearly all RNA polymerase II-dependent genes. Mediator functions as a bridge to convey information from gene-specific regulatory proteins to the basal RNA polymerase II transcription machinery. Mediator is recruited to promoters by direct interactions with regulatory proteins and serves as a scaffold for the assembly of a functional preinitiation complex with RNA polymerase II and the general transcription factors. The sequence is that of Mediator of RNA polymerase II transcription subunit 20 (Med20) from Rattus norvegicus (Rat).